The sequence spans 393 residues: Putative odorant receptor 69a, isoform A (393 aa).

The Cytoplasmic segment spans residues Met1–Arg39. A helical membrane pass occupies residues Ile40–Trp60. At Tyr61 to Gln76 the chain is on the extracellular side. Residues Leu77–Ile97 form a helical membrane-spanning segment. The Cytoplasmic portion of the chain corresponds to Ser98–Glu139. Residues Phe140 to Trp160 traverse the membrane as a helical segment. Residues Glu161 to Gly189 lie on the Extracellular side of the membrane. A helical transmembrane segment spans residues Phe190–Val210. Residues Thr211–Asn269 are Cytoplasmic-facing. Residues Phe270 to Ile290 traverse the membrane as a helical segment. Topologically, residues Met291–Gly304 are extracellular. The helical transmembrane segment at Leu305–Ala325 threads the bilayer. The Cytoplasmic portion of the chain corresponds to Ser326–Tyr365. Residues Lys366–Phe386 traverse the membrane as a helical segment. At Thr387–Lys393 the chain is on the extracellular side.

It belongs to the insect chemoreceptor superfamily. Heteromeric odorant receptor channel (TC 1.A.69) family. Or49a subfamily. Interacts with Orco. Complexes exist early in the endomembrane system in olfactory sensory neurons (OSNs), coupling these complexes to the conserved ciliary trafficking pathway. As to expression, expressed in olfactory sensory neurons in the antenna.

Its subcellular location is the cell membrane. Its function is as follows. Odorant receptor which mediates acceptance or avoidance behavior, depending on its substrates. The odorant receptor repertoire encodes a large collection of odor stimuli that vary widely in identity, intensity, and duration. May form a complex with Orco to form odorant-sensing units, providing sensitive and prolonged odorant signaling and calcium permeability. The chain is Putative odorant receptor 69a, isoform A (Or69a) from Drosophila melanogaster (Fruit fly).